Reading from the N-terminus, the 418-residue chain is MAKLLQSPPRFLPEEWYIANKSQYHRAEAQRSQSERLVAESQRLVEEIEKTTRKSQSDVNKKLEQRLEEVRFWKKELDDKLEQLVNQTDDLLTYKTRLERSLESYKEPLHITEKCLEYREKRVGIDLVHDVVEQELQKEADIIHGVMNLLIRTLEESTEQIRLNRSAKYNLEKDLRDKFTAITIDDVCFSLNNNSPNINFSEKVVRIEPNSVSLEDWLDFSNANVEKADKQLNNSTALKTLVDQILSQTANDLRRQCEVVDEAFINGLKETKDARNKLADHLAKVMEEIASQEKNIMALENAITQQEGPAKVAHTRLETRTHRPNVELCRDIAQYRLIKEIQEINHNVARLKETLAQAQTQLKALYRRQLALQEEIQVKENTIYIDQVLCMEMRKSIPPRDGDDHGAWEGGIRAEAIC.

Coiled-coil stretches lie at residues 20 to 107, 134 to 177, 266 to 308, and 332 to 383; these read NKSQ…SYKE, QELQ…DLRD, NGLK…QQEG, and IAQY…ENTI.

This sequence belongs to the tektin family. Microtubule inner protein component of sperm flagellar doublet microtubules. Post-translationally, ubiquitinated, leading to its degradation. Deubiquitinated by USP16, promoting its stability.

The protein resides in the cytoplasm. The protein localises to the cytoskeleton. It is found in the cilium axoneme. Its subcellular location is the flagellum axoneme. In terms of biological role, microtubule inner protein (MIP) part of the dynein-decorated doublet microtubules (DMTs) in cilia and flagellar axoneme. Forms filamentous polymers in the walls of ciliary and flagellar microtubules. This Mus musculus (Mouse) protein is Tektin-1 (Tekt1).